The following is a 728-amino-acid chain: Polyribonucleotide nucleotidyltransferase (728 aa).

Mg(2+)-binding residues include D488 and D494. Residues 555 to 614 enclose the KH domain; it reads PRMITMKIHPDKIREVIGKGGSTIQALTKETGTTIDIQEDGTITIASTSTDGMAEAKRRI. In terms of domain architecture, S1 motif spans 624 to 692; it reads GKIYNGTVLK…EKGRLRLSLK (69 aa). Residues 702–728 form a disordered region; it reads ISPVNAGEAAPAPAPAAAPATPSDQQQ. A compositionally biased stretch (low complexity) spans 710 to 721; that stretch reads AAPAPAPAAAPA.

Belongs to the polyribonucleotide nucleotidyltransferase family. It depends on Mg(2+) as a cofactor.

It is found in the cytoplasm. The catalysed reaction is RNA(n+1) + phosphate = RNA(n) + a ribonucleoside 5'-diphosphate. Its function is as follows. Involved in mRNA degradation. Catalyzes the phosphorolysis of single-stranded polyribonucleotides processively in the 3'- to 5'-direction. The chain is Polyribonucleotide nucleotidyltransferase from Cupriavidus pinatubonensis (strain JMP 134 / LMG 1197) (Cupriavidus necator (strain JMP 134)).